The sequence spans 461 residues: UDP-N-acetylmuramate--L-alanine ligase (461 aa).

Residue 112–118 participates in ATP binding; that stretch reads GTHGKTT.

The protein belongs to the MurCDEF family.

It localises to the cytoplasm. The enzyme catalyses UDP-N-acetyl-alpha-D-muramate + L-alanine + ATP = UDP-N-acetyl-alpha-D-muramoyl-L-alanine + ADP + phosphate + H(+). The protein operates within cell wall biogenesis; peptidoglycan biosynthesis. In terms of biological role, cell wall formation. The polypeptide is UDP-N-acetylmuramate--L-alanine ligase (Geobacter sp. (strain M21)).